We begin with the raw amino-acid sequence, 201 residues long: Cytochrome c oxidase assembly protein CtaG (201 aa).

Residues 1–13 lie on the Cytoplasmic side of the membrane; sequence MTDQGENEKKQRR. The helical; Signal-anchor for type II membrane protein transmembrane segment at 14–36 threads the bilayer; it reads SNATIAVACLSFFVCMIGAAYAS. Residues 37-201 lie on the Periplasmic side of the membrane; it reads VPLYRIFCQV…KAVGSTRNGG (165 aa).

Belongs to the COX11/CtaG family.

It is found in the cell inner membrane. In terms of biological role, exerts its effect at some terminal stage of cytochrome c oxidase synthesis, probably by being involved in the insertion of the copper B into subunit I. In Brucella ovis (strain ATCC 25840 / 63/290 / NCTC 10512), this protein is Cytochrome c oxidase assembly protein CtaG.